Reading from the N-terminus, the 360-residue chain is Squamosa promoter-binding-like protein 7 (360 aa).

Residues 74 to 89 show a composition bias toward gly residues; the sequence is AQGSGGGGGGGGGGSA. The interval 74-98 is disordered; the sequence is AQGSGGGGGGGGGGSADQGKRKEKA. Residues 105-182 form an SBP-type zinc finger; sequence VPRCQVEGCD…AGHNERRRRS (78 aa). Zn(2+) is bound by residues cysteine 108, cysteine 113, cysteine 130, histidine 133, cysteine 149, cysteine 152, histidine 156, and cysteine 168. Residues 165–181 carry the Bipartite nuclear localization signal motif; sequence KKSCRRRLAGHNERRRR. Over residues 172-182 the composition is skewed to basic residues; that stretch reads LAGHNERRRRS. 3 disordered regions span residues 172–196, 261–306, and 320–360; these read LAGH…AHPH, FFSD…HEHQ, and AAGG…ARVV.

Expressed in young panicles.

The protein resides in the nucleus. Its function is as follows. Trans-acting factor that binds specifically to the consensus nucleotide sequence 5'-TNCGTACAA-3'. May be involved in panicle development. In Oryza sativa subsp. indica (Rice), this protein is Squamosa promoter-binding-like protein 7 (SPL7).